A 348-amino-acid chain; its full sequence is GTPase Obg (348 aa).

The region spanning 1 to 160 is the Obg domain; sequence MHFLDQAKIF…MWVWLRLKLL (160 aa). A disordered region spans residues 120–145; the sequence is RGGDGGRGNASYKTSTNRAPRQHGPG. The 168-residue stretch at 161–328 folds into the OBG-type G domain; sequence ADAGLVGLPN…VLDKLLEAIG (168 aa). GTP is bound by residues 167 to 174, 192 to 196, 213 to 216, 280 to 283, and 309 to 311; these read GLPNAGKS, FTTLR, DIPG, NKID, and SGA. Mg(2+)-binding residues include S174 and T194. The disordered stretch occupies residues 326–348; it reads AIGQPEPGPDADEEEKGGDWSPI.

It belongs to the TRAFAC class OBG-HflX-like GTPase superfamily. OBG GTPase family. In terms of assembly, monomer. Mg(2+) is required as a cofactor.

Its subcellular location is the cytoplasm. An essential GTPase which binds GTP, GDP and possibly (p)ppGpp with moderate affinity, with high nucleotide exchange rates and a fairly low GTP hydrolysis rate. Plays a role in control of the cell cycle, stress response, ribosome biogenesis and in those bacteria that undergo differentiation, in morphogenesis control. This Sphingopyxis alaskensis (strain DSM 13593 / LMG 18877 / RB2256) (Sphingomonas alaskensis) protein is GTPase Obg.